We begin with the raw amino-acid sequence, 394 residues long: Probable dual specificity protein phosphatase DDB_G0281963 (394 aa).

The Tyrosine-protein phosphatase domain maps to 2–142 (NDVSRIFPGF…LKKYELILKK (141 aa)). Residue cysteine 86 is the Phosphocysteine intermediate of the active site. Residues 147 to 191 (PQIVEKESEEEDDDEDDDDDDYDSDEDDDDDSEDDDFEEEFDNVV) are disordered. Over residues 153–188 (ESEEEDDDEDDDDDDYDSDEDDDDDSEDDDFEEEFD) the composition is skewed to acidic residues.

This sequence belongs to the protein-tyrosine phosphatase family. Non-receptor class dual specificity subfamily.

It catalyses the reaction O-phospho-L-tyrosyl-[protein] + H2O = L-tyrosyl-[protein] + phosphate. It carries out the reaction O-phospho-L-seryl-[protein] + H2O = L-seryl-[protein] + phosphate. The enzyme catalyses O-phospho-L-threonyl-[protein] + H2O = L-threonyl-[protein] + phosphate. Its function is as follows. Has a dual specificity toward Ser/Thr and Tyr-containing proteins. The polypeptide is Probable dual specificity protein phosphatase DDB_G0281963 (Dictyostelium discoideum (Social amoeba)).